A 126-amino-acid chain; its full sequence is Glycine cleavage system H protein (126 aa).

In terms of domain architecture, Lipoyl-binding spans aspartate 19–glutamate 100. Lysine 60 is modified (N6-lipoyllysine).

It belongs to the GcvH family. The glycine cleavage system is composed of four proteins: P, T, L and H. (R)-lipoate serves as cofactor.

The glycine cleavage system catalyzes the degradation of glycine. The H protein shuttles the methylamine group of glycine from the P protein to the T protein. In Koribacter versatilis (strain Ellin345), this protein is Glycine cleavage system H protein.